A 256-amino-acid chain; its full sequence is NH(3)-dependent NAD(+) synthetase (256 aa).

29-36 (GISGGIDS) provides a ligand contact to ATP. Residue Asp-35 participates in Mg(2+) binding. Arg-115 contributes to the deamido-NAD(+) binding site. An ATP-binding site is contributed by Thr-135. Mg(2+) is bound at residue Glu-140. Residues Lys-148 and Asp-155 each coordinate deamido-NAD(+). Positions 164 and 186 each coordinate ATP. 245 to 246 (HK) is a binding site for deamido-NAD(+).

The protein belongs to the NAD synthetase family. In terms of assembly, homodimer.

The enzyme catalyses deamido-NAD(+) + NH4(+) + ATP = AMP + diphosphate + NAD(+) + H(+). It functions in the pathway cofactor biosynthesis; NAD(+) biosynthesis; NAD(+) from deamido-NAD(+) (ammonia route): step 1/1. Catalyzes the ATP-dependent amidation of deamido-NAD to form NAD. Uses ammonia as a nitrogen source. The chain is NH(3)-dependent NAD(+) synthetase from Methanosarcina acetivorans (strain ATCC 35395 / DSM 2834 / JCM 12185 / C2A).